A 280-amino-acid polypeptide reads, in one-letter code: Lysosome-associated membrane glycoprotein 5 (280 aa).

The first 29 residues, 1–29 (MDLRVRTLLGGDRLRILLMFFHVMVQTVA), serve as a signal peptide directing secretion. Residues 30-235 (EQEVENLSGL…PVDEQEQLEE (206 aa)) are Extracellular-facing. Asn-35, Asn-53, Asn-102, and Asn-127 each carry an N-linked (GlcNAc...) asparagine glycan. The chain crosses the membrane as a helical span at residues 236–256 (TLPLILGLILGLVIVITLVIY). Residues 257 to 280 (HIHHKMTANQVQIPRDRSQYKHMG) lie on the Cytoplasmic side of the membrane.

Belongs to the LAMP family. Post-translationally, glycosylated. In brain, strongly expressed in the globus pallidus/ventral pallidum complex, the substantia nigra pars reticulata and the entopeduncular nucleus (at protein level). Expressed in the external plexiform layer of the olfactory bulb (at protein level). May be weakly expressed in neocortex and striatum (at protein level). Highly expressed in brain; not detected in other tissues tested. Detected in the cingulate cortex, cortical plate and caudate putamen. In neocortex, specifically expressed in neurons of layers II/III and V.

The protein resides in the cytoplasmic vesicle membrane. Its subcellular location is the cell membrane. The protein localises to the cell projection. It is found in the dendrite. It localises to the cytoplasmic vesicle. The protein resides in the secretory vesicle. Its subcellular location is the synaptic vesicle membrane. The protein localises to the growth cone membrane. It is found in the early endosome membrane. It localises to the recycling endosome. The protein resides in the endoplasmic reticulum-Golgi intermediate compartment membrane. Its subcellular location is the endosome membrane. Functionally, plays a role in short-term synaptic plasticity in a subset of GABAergic neurons in the brain. The sequence is that of Lysosome-associated membrane glycoprotein 5 (Lamp5) from Mus musculus (Mouse).